The following is a 480-amino-acid chain: Acyl-lipid (8-3)-desaturase (480 aa).

The tract at residues 1 to 30 (MAPHSADTAGLVPSDELRLRTSNSKGPEQE) is disordered. Residues 33 to 107 (LKKYTLEDVS…LAKYCIGELV (75 aa)) enclose the Cytochrome b5 heme-binding domain. Histidine 68 and histidine 90 together coordinate heme. Transmembrane regions (helical) follow at residues 151–171 (IHPH…ASYY) and 173–193 (AFFW…MGFF). The Histidine box-1 motif lies at 203-207 (HDGNH). The Histidine box-2 signature appears at 238 to 243 (HVVGHH). A run of 3 helical transmembrane segments spans residues 280-300 (IYLA…DDFL), 322-342 (IFFQ…SVYG), and 348-368 (TFLA…AFLF). The short motif at 419-423 (QIEHH) is the Histidine box-3 element.

It belongs to the fatty acid desaturase type 1 family. The cofactor is Fe(2+).

It is found in the membrane. The enzyme catalyses an (8Z,11Z,14Z)-icosatrienoyl-containing glycerolipid + 2 Fe(II)-[cytochrome b5] + O2 + 2 H(+) = (5Z,8Z,11Z,14Z)-eicosatetraenoyl-containing glycerolipid + 2 Fe(III)-[cytochrome b5] + 2 H2O. It carries out the reaction an (8Z,11Z,14Z,17Z)-eicosatetraenoyl-containing glycerolipid + 2 Fe(II)-[cytochrome b5] + O2 + 2 H(+) = a (5Z,8Z,11Z,14Z,17Z)-eicosapentaenoyl-containing glycerolipid + 2 Fe(III)-[cytochrome b5] + 2 H2O. In terms of biological role, fatty acid desaturase that introduces a cis double bond at the 5-position in 20-carbon polyunsaturated fatty acids incorporated in a glycerolipid that contain a Delta(8) double bond. This is Acyl-lipid (8-3)-desaturase from Physcomitrium patens (Spreading-leaved earth moss).